The chain runs to 308 residues: N-acetyl-gamma-glutamyl-phosphate reductase (308 aa).

The active site involves cysteine 116.

This sequence belongs to the NAGSA dehydrogenase family. Type 2 subfamily.

The protein resides in the cytoplasm. The enzyme catalyses N-acetyl-L-glutamate 5-semialdehyde + phosphate + NADP(+) = N-acetyl-L-glutamyl 5-phosphate + NADPH + H(+). The protein operates within amino-acid biosynthesis; L-arginine biosynthesis; N(2)-acetyl-L-ornithine from L-glutamate: step 3/4. Catalyzes the NADPH-dependent reduction of N-acetyl-5-glutamyl phosphate to yield N-acetyl-L-glutamate 5-semialdehyde. The polypeptide is N-acetyl-gamma-glutamyl-phosphate reductase (Mesorhizobium japonicum (strain LMG 29417 / CECT 9101 / MAFF 303099) (Mesorhizobium loti (strain MAFF 303099))).